An 859-amino-acid chain; its full sequence is Leucine--tRNA ligase (859 aa).

Residues Pro42 to His52 carry the 'HIGH' region motif. A 'KMSKS' region motif is present at residues Lys618 to Ser622. Lys621 contributes to the ATP binding site.

The protein belongs to the class-I aminoacyl-tRNA synthetase family.

It localises to the cytoplasm. The catalysed reaction is tRNA(Leu) + L-leucine + ATP = L-leucyl-tRNA(Leu) + AMP + diphosphate. This chain is Leucine--tRNA ligase, found in Shewanella baltica (strain OS185).